The chain runs to 212 residues: Large ribosomal subunit protein uL3 (212 aa).

Residues 117–142 (TSKGKGFQGNIKRHNQSRGPMTHGSR) form a disordered region.

Belongs to the universal ribosomal protein uL3 family. As to quaternary structure, part of the 50S ribosomal subunit. Forms a cluster with proteins L14 and L19.

In terms of biological role, one of the primary rRNA binding proteins, it binds directly near the 3'-end of the 23S rRNA, where it nucleates assembly of the 50S subunit. The protein is Large ribosomal subunit protein uL3 of Acholeplasma laidlawii (strain PG-8A).